The chain runs to 122 residues: Large ribosomal subunit protein uL14 (122 aa).

This sequence belongs to the universal ribosomal protein uL14 family. In terms of assembly, part of the 50S ribosomal subunit. Forms a cluster with proteins L3 and L19. In the 70S ribosome, L14 and L19 interact and together make contacts with the 16S rRNA in bridges B5 and B8.

In terms of biological role, binds to 23S rRNA. Forms part of two intersubunit bridges in the 70S ribosome. In Fusobacterium nucleatum subsp. nucleatum (strain ATCC 25586 / DSM 15643 / BCRC 10681 / CIP 101130 / JCM 8532 / KCTC 2640 / LMG 13131 / VPI 4355), this protein is Large ribosomal subunit protein uL14.